A 500-amino-acid polypeptide reads, in one-letter code: MSDHNATPAAQDENHIIAERREKLAQWRQAGRAFPNDFSRENTAGKLDEVYGDKEPEALEASPVEVRVAGRVMLKRVMGKASFITIQDLSGRIQLYVQRDGVGEDVYADFKHWDIGDIVGCVGTLFKTKTGELTVKASEIRLLTKSLRPLPDKFHGLTDVEQKYRQRYLDLIMSEQTRFTFVARSRMVQSIRNYMINHGFLEVETPMMHPIPGGAAAKPFVTHHNALDMELFLRIAPELYLKRLVVGGLEKVFEVNRNFRNEGLSPRHNPEFTMMEFYEAYADYRSLMNFTEGLIRQAAREALGAESFVYQGRELDLSKPFHRLTIVQAIRKYHPGFSEAQLADAEWVKEKIQAFGEKVKPGGLGSLQLQLFEACAEAELWEPTFIIDYPVEVSPLARASDSNPEITERFELFIVGREIANGFSELNDPEDQAARFLAQAQAKEAGDEEAMYYDADYIRALEFGLPPTGGCGIGIDRLVMLLTDSASIRDVILFPQMRPE.

Residues E411 and E418 each coordinate Mg(2+).

It belongs to the class-II aminoacyl-tRNA synthetase family. Homodimer. Requires Mg(2+) as cofactor.

The protein resides in the cytoplasm. It catalyses the reaction tRNA(Lys) + L-lysine + ATP = L-lysyl-tRNA(Lys) + AMP + diphosphate. This is Lysine--tRNA ligase from Azoarcus sp. (strain BH72).